Here is a 53-residue protein sequence, read N- to C-terminus: Metallocarboxypeptidase inhibitor (53 aa).

3 cysteine pairs are disulfide-bonded: Cys9–Cys23, Cys15–Cys51, and Cys27–Cys38. Ala53 contributes to the Zn(2+) binding site.

As to quaternary structure, monomer. Interacts (via C-terminus) with human CPA4.

Its function is as follows. Metallocarboxypeptidase inhibitor. Has an inhibitory effect on bovine CPA1 and CPB2, human CPA1, CPA2, CPA4, CPB1 and CPB2, and porcine CPB1. Does not inhibit D.melanogaster svr (carboxypeptidase D). Shows no activity against serine proteases subtilisin or bovine trypsin, cysteine protease papain, and aspartyl protease porcine pepsin. This chain is Metallocarboxypeptidase inhibitor, found in Nerita versicolor (Four-tooth nerite).